The following is a 160-amino-acid chain: MGGLLIKQLSTEEDRVVVIRFGHDYNPECMKQDDILASIAEKVKNMAVIYVVDITEVPDLNSMYELYDDCPTMFFYRNKHIMVDLGTGNNNKINWALTNKQDMIDIIETVYKGARKGKGLVNSPRDFSPQYKFLKKKKKKKNKKKQKKKIKKIKKKIKNN.

A disordered region spans residues 132 to 160; it reads KFLKKKKKKKNKKKQKKKIKKIKKKIKNN. The segment covering 133 to 160 has biased composition (basic residues); that stretch reads FLKKKKKKKNKKKQKKKIKKIKKKIKNN.

Belongs to the DIM1 family. Component of the precatalytic spliceosome (spliceosome B complex). Component of the U5 snRNP complex. Component of the U4/U6-U5 tri-snRNP complex.

It localises to the nucleus. In terms of biological role, plays a role in pre-mRNA splicing as component of the U5 snRNP and U4/U6-U5 tri-snRNP complexes that are involved in spliceosome assembly, and as component of the precatalytic spliceosome (spliceosome B complex). The polypeptide is Thioredoxin-like protein 4A homolog (txnl4a) (Dictyostelium discoideum (Social amoeba)).